Reading from the N-terminus, the 229-residue chain is MAEVKNKKASVATPEKETVVVQKDKAAALVKPQFNAQVDKRMLVEEVHQQAIFDSILSERASRRQGTHQVKNRAAVSGSGKKPWKQKGTGRARHSSRRSPIWVGGGRAFGPQSVKNYSLKVNKKVKQLAFRSALTMLVNDKAVLVEDFKMDKISTKDLSQKLKSLNVDKLRHVILVSENATVFKSSANLKNVTTLKAHSLNVETLVRADVLLVENESMKLLTERVLGSN.

A disordered region spans residues Ser62–Val103. The span at Lys82–Arg97 shows a compositional bias: basic residues.

Belongs to the universal ribosomal protein uL4 family. As to quaternary structure, part of the 50S ribosomal subunit.

One of the primary rRNA binding proteins, this protein initially binds near the 5'-end of the 23S rRNA. It is important during the early stages of 50S assembly. It makes multiple contacts with different domains of the 23S rRNA in the assembled 50S subunit and ribosome. Its function is as follows. Forms part of the polypeptide exit tunnel. In Mycoplasmopsis synoviae (strain 53) (Mycoplasma synoviae), this protein is Large ribosomal subunit protein uL4.